The following is a 147-amino-acid chain: MKIISDNKRGMHNYKVIDKYEAGISLMGWEVKSARANTVSLLNSYCFFRKGEIFLCNAQFKQYMLVKCDETRDRKLLMHKNEIVRLQSKLHKLGHATIIPSKIYFDNRSRIKIEIALVQGMKKTDKREEIKKRDNERYIKKVLKNVY.

This sequence belongs to the SmpB family.

Its subcellular location is the cytoplasm. Its function is as follows. Required for rescue of stalled ribosomes mediated by trans-translation. Binds to transfer-messenger RNA (tmRNA), required for stable association of tmRNA with ribosomes. tmRNA and SmpB together mimic tRNA shape, replacing the anticodon stem-loop with SmpB. tmRNA is encoded by the ssrA gene; the 2 termini fold to resemble tRNA(Ala) and it encodes a 'tag peptide', a short internal open reading frame. During trans-translation Ala-aminoacylated tmRNA acts like a tRNA, entering the A-site of stalled ribosomes, displacing the stalled mRNA. The ribosome then switches to translate the ORF on the tmRNA; the nascent peptide is terminated with the 'tag peptide' encoded by the tmRNA and targeted for degradation. The ribosome is freed to recommence translation, which seems to be the essential function of trans-translation. In Mycoplasmopsis fermentans (strain ATCC 19989 / NBRC 14854 / NCTC 10117 / PG18) (Mycoplasma fermentans), this protein is SsrA-binding protein.